Reading from the N-terminus, the 251-residue chain is ATP synthase subunit a (251 aa).

5 helical membrane passes run 14 to 34, 78 to 98, 107 to 127, 174 to 194, and 196 to 216; these read GFVKLNGTIIYTWLLMLLLAV, YLPFLGTLFVFVAVANLFAVF, SLSTTVALAICVFVAVPFYGI, MILAIMLIITPFIFPVVMGVL, and LLIGGVQAYIFSILATVYIAA. The tract at residues 224–251 is disordered; the sequence is NAGASDDEGGEDAKSACAAGGKICKHKP.

Belongs to the ATPase A chain family. As to quaternary structure, F-type ATPases have 2 components, CF(1) - the catalytic core - and CF(0) - the membrane proton channel. CF(1) has five subunits: alpha(3), beta(3), gamma(1), delta(1), epsilon(1). CF(0) has three main subunits: a(1), b(2) and c(9-12). The alpha and beta chains form an alternating ring which encloses part of the gamma chain. CF(1) is attached to CF(0) by a central stalk formed by the gamma and epsilon chains, while a peripheral stalk is formed by the delta and b chains.

It is found in the cell inner membrane. In terms of biological role, key component of the proton channel; it plays a direct role in the translocation of protons across the membrane. The polypeptide is ATP synthase subunit a (Nitrosospira multiformis (strain ATCC 25196 / NCIMB 11849 / C 71)).